A 91-amino-acid polypeptide reads, in one-letter code: MGRSLKKGPFVDAHLIDKVEAVRATSDKRPIKTWSRRSTILPEFIGLTIAVHNGKQHIPVFVTENMVGHKLGEFSLTRTFKGHTAGKKAKK.

Belongs to the universal ribosomal protein uS19 family.

In terms of biological role, protein S19 forms a complex with S13 that binds strongly to the 16S ribosomal RNA. The polypeptide is Small ribosomal subunit protein uS19 (Dechloromonas aromatica (strain RCB)).